Consider the following 249-residue polypeptide: Probable septum site-determining protein MinC (249 aa).

Residues 116–149 (AAVSPPPPPPPPPARAEPAAPVARPAPGRMQRNA) form a disordered region. A compositionally biased stretch (pro residues) spans 119–130 (SPPPPPPPPPAR). The segment covering 131–142 (AEPAAPVARPAP) has biased composition (low complexity).

The protein belongs to the MinC family. Interacts with MinD and FtsZ.

Its function is as follows. Cell division inhibitor that blocks the formation of polar Z ring septums. Rapidly oscillates between the poles of the cell to destabilize FtsZ filaments that have formed before they mature into polar Z rings. Prevents FtsZ polymerization. The protein is Probable septum site-determining protein MinC of Xanthomonas campestris pv. campestris (strain ATCC 33913 / DSM 3586 / NCPPB 528 / LMG 568 / P 25).